The primary structure comprises 133 residues: Ribosome-binding factor A (133 aa).

The protein belongs to the RbfA family. As to quaternary structure, monomer. Binds 30S ribosomal subunits, but not 50S ribosomal subunits or 70S ribosomes.

Its subcellular location is the cytoplasm. Its function is as follows. One of several proteins that assist in the late maturation steps of the functional core of the 30S ribosomal subunit. Associates with free 30S ribosomal subunits (but not with 30S subunits that are part of 70S ribosomes or polysomes). Required for efficient processing of 16S rRNA. May interact with the 5'-terminal helix region of 16S rRNA. The sequence is that of Ribosome-binding factor A from Bordetella bronchiseptica (strain ATCC BAA-588 / NCTC 13252 / RB50) (Alcaligenes bronchisepticus).